The following is a 122-amino-acid chain: Large ribosomal subunit protein uL14 (122 aa).

The protein belongs to the universal ribosomal protein uL14 family. As to quaternary structure, part of the 50S ribosomal subunit. Forms a cluster with proteins L3 and L19. In the 70S ribosome, L14 and L19 interact and together make contacts with the 16S rRNA in bridges B5 and B8.

Functionally, binds to 23S rRNA. Forms part of two intersubunit bridges in the 70S ribosome. The sequence is that of Large ribosomal subunit protein uL14 from Sulfurovum sp. (strain NBC37-1).